The primary structure comprises 260 residues: Probable 6-oxopurine nucleoside phosphorylase (260 aa).

Phosphate is bound by residues Ser-9 and 49-50 (RH). A substrate-binding site is contributed by Met-182. Thr-183 contributes to the phosphate binding site. Substrate is bound at residue 206–208 (NMA).

It belongs to the PNP/MTAP phosphorylase family. MTAP subfamily. In terms of assembly, homohexamer. Dimer of a homotrimer.

It carries out the reaction a purine D-ribonucleoside + phosphate = a purine nucleobase + alpha-D-ribose 1-phosphate. Its pathway is purine metabolism; purine nucleoside salvage. In terms of biological role, purine nucleoside phosphorylase which is highly specific for 6-oxopurine nucleosides. Cleaves guanosine or inosine to respective bases and sugar-1-phosphate molecules. Involved in purine salvage. The polypeptide is Probable 6-oxopurine nucleoside phosphorylase (Moorella thermoacetica (strain ATCC 39073 / JCM 9320)).